Consider the following 317-residue polypeptide: MPMQGAQGRLRGSLNATPPTTPHSGLAGNQTGPWCLEVSIPDELFLSLGLVSLVENMLVVAAIAKNRNLHSPMYYFICCLAVSDLLVSVSNVLETAVMLLLEAGVLAAWAGVVQQLDNAIDVFICGSMVSSLCFLGAIAVDRYITIFYALRYHSIVTLPRARWAIATIWAASVVCSTLFIAYYDCTAVLLCLVSFFLALVVLMAVLYMHMLARACLHARSIARLHKRWRPVHQGLGLKGAATLSILLGSFFLCWGPFFLHLTLIVLCPQHPTCSCVFKNFKLFLTLIICNSIVDPLIYAFRSQELRKTLKEVLLCSW.

The interval 1–28 (MPMQGAQGRLRGSLNATPPTTPHSGLAG) is disordered. Residues 1-37 (MPMQGAQGRLRGSLNATPPTTPHSGLAGNQTGPWCLE) are Extracellular-facing. Asn29 is a glycosylation site (N-linked (GlcNAc...) asparagine). A helical transmembrane segment spans residues 38-63 (VSIPDELFLSLGLVSLVENMLVVAAI). The Cytoplasmic portion of the chain corresponds to 64-72 (AKNRNLHSP). Residues 73-93 (MYYFICCLAVSDLLVSVSNVL) traverse the membrane as a helical segment. Over 94-118 (ETAVMLLLEAGVLAAWAGVVQQLDN) the chain is Extracellular. Residues 119–140 (AIDVFICGSMVSSLCFLGAIAV) form a helical membrane-spanning segment. Topologically, residues 141–163 (DRYITIFYALRYHSIVTLPRARW) are cytoplasmic. Residues 164–183 (AIATIWAASVVCSTLFIAYY) form a helical membrane-spanning segment. At 184-191 (DCTAVLLC) the chain is on the extracellular side. A helical transmembrane segment spans residues 192 to 211 (LVSFFLALVVLMAVLYMHML). Over 212 to 240 (ARACLHARSIARLHKRWRPVHQGLGLKGA) the chain is Cytoplasmic. Residues 241–266 (ATLSILLGSFFLCWGPFFLHLTLIVL) traverse the membrane as a helical segment. At 267–279 (CPQHPTCSCVFKN) the chain is on the extracellular side. The helical transmembrane segment at 280 to 300 (FKLFLTLIICNSIVDPLIYAF) threads the bilayer. The Cytoplasmic segment spans residues 301-317 (RSQELRKTLKEVLLCSW). Cys315 carries S-palmitoyl cysteine lipidation.

The protein belongs to the G-protein coupled receptor 1 family. As to quaternary structure, interacts with MGRN1, but does not undergo MGRN1-mediated ubiquitination; this interaction competes with GNAS-binding and thus inhibits agonist-induced cAMP production. Interacts with OPN3; the interaction results in a decrease in MC1R-mediated cAMP signaling and ultimately a decrease in melanin production in melanocytes.

It is found in the cell membrane. In terms of biological role, receptor for MSH (alpha, beta and gamma) and ACTH. The activity of this receptor is mediated by G proteins which activate adenylate cyclase. Mediates melanogenesis, the production of eumelanin (black/brown) and phaeomelanin (red/yellow), via regulation of cAMP signaling in melanocytes. The protein is Melanocyte-stimulating hormone receptor (MC1R) of Mammuthus primigenius (Siberian woolly mammoth).